We begin with the raw amino-acid sequence, 476 residues long: Glycogen synthase (476 aa).

Lys15 contacts ADP-alpha-D-glucose.

The protein belongs to the glycosyltransferase 1 family. Bacterial/plant glycogen synthase subfamily.

The catalysed reaction is [(1-&gt;4)-alpha-D-glucosyl](n) + ADP-alpha-D-glucose = [(1-&gt;4)-alpha-D-glucosyl](n+1) + ADP + H(+). It functions in the pathway glycan biosynthesis; glycogen biosynthesis. Synthesizes alpha-1,4-glucan chains using ADP-glucose. The polypeptide is Glycogen synthase (Streptococcus equi subsp. zooepidemicus (strain H70)).